We begin with the raw amino-acid sequence, 129 residues long: MDKNIKEIIKNMDLKFRNIDGKKLLLAISTDKQKNVLMTAFMSEESLEKSIETGYMHYYSTSRDKIWKKGEESKNVQKIIDVYRDCDGDALLFTVEQTGWACHEGYMSCFHNKIDLNTGDSTVIGTKLD.

D85 serves as a coordination point for Mg(2+). Zn(2+) is bound at residue C86. Mg(2+) contacts are provided by D87 and D89. 2 residues coordinate Zn(2+): C102 and C109.

It belongs to the PRA-CH family. As to quaternary structure, homodimer. Requires Mg(2+) as cofactor. The cofactor is Zn(2+).

It localises to the cytoplasm. The enzyme catalyses 1-(5-phospho-beta-D-ribosyl)-5'-AMP + H2O = 1-(5-phospho-beta-D-ribosyl)-5-[(5-phospho-beta-D-ribosylamino)methylideneamino]imidazole-4-carboxamide. Its pathway is amino-acid biosynthesis; L-histidine biosynthesis; L-histidine from 5-phospho-alpha-D-ribose 1-diphosphate: step 3/9. Functionally, catalyzes the hydrolysis of the adenine ring of phosphoribosyl-AMP. The sequence is that of Phosphoribosyl-AMP cyclohydrolase (hisI) from Methanococcus maripaludis (strain DSM 14266 / JCM 13030 / NBRC 101832 / S2 / LL).